Consider the following 854-residue polypeptide: Disrupted in schizophrenia 1 protein (854 aa).

The span at 1 to 18 (MPGGGPQGAPAAAGGGGV) shows a compositional bias: gly residues. Disordered regions lie at residues 1–24 (MPGG…RAGS), 179–205 (SAEL…SHSA), 221–257 (GERG…GPHE), and 278–323 (AQAA…SGDA). Residues 1 to 292 (MPGGGPQGAP…NSSRPERDMH (292 aa)) are interaction with MAP1A. Residues 197–203 (PTPPGSH) carry the Interaction with FBXW7 motif. The span at 285-295 (SRPERDMHSLP) shows a compositional bias: basic and acidic residues. Positions 293–696 (SLPDMDPGSS…LGKVWEADLE (404 aa)) are interaction with TRAF3IP1. Residues 296–309 (DMDPGSSSSLDPSL) are compositionally biased toward low complexity. Coiled-coil stretches lie at residues 366 to 394 (ENDD…HFQL), 452 to 505 (ITRR…CDLT), and 602 to 666 (WTAK…SVKE). A Glycyl lysine isopeptide (Lys-Gly) (interchain with G-Cter in ubiquitin) cross-link involves residue K372. Positions 440 to 597 (LEPTAQDSLH…LLEAKMHAIS (158 aa)) are required for localization to punctate cytoplasmic foci. The interval 446-854 (DSLHVSITRR…MTAGVHEAQA (409 aa)) is necessary and sufficient for interaction with PCNT and localization at the centrosome. The segment at 598–854 (GNHFWTAKDL…MTAGVHEAQA (257 aa)) is interaction with ATF4 and ATF5. Positions 716 to 739 (VEDERQMDDLEGAAPPIPPRLHSE) are disordered. Positions 727–854 (GAAPPIPPRL…MTAGVHEAQA (128 aa)) are interaction with PAFAH1B1. Positions 802 to 830 (SHDEDLIQSLRRELQMVKETLQAMILQLQ) form a coiled coil. Residues 802–835 (SHDEDLIQSLRRELQMVKETLQAMILQLQPAKEA) form an interaction with NDEL1 region.

Interacts with NDEL1. Interacts with CCDC88A (via C-terminus); the interaction is direct. Interacts with GSK3B. Interacts with tubulin alpha, ACTN2, ANKHD1, ATF4, ATF5, CEP63, EIF3S3, MAP1A, NDEL1, PAFAH1B1, RANBP9, SPTBN4, SYNE1 and TRAF3IP1. Interaction with microtubules may be mediated in part by TRAF3IP1. Interacts (via C-terminal) with PCNT. Interacts with CHCHD6. Interacts with CCDC141. Interacts with FBXW7, the substrate-recognition component of a SCF (SKP1-CUL1-F-box protein) E3 ubiquitin-protein ligase complex; the interaction targets DISC1 for proteasomal degradation. Interacts with ZNF365. Interacts with ATF4; inhibiting ATF4 transcription factor activity by disrupting ATF4 dimerization and DNA-binding. Interacts with PDE4B (isoform PDE4B5). Ubiquitinated. Ubiquitination with 'Lys-48'-linked polyubiquitin chains leads to its proteasomal degradation. As to expression, ubiquitous. Highly expressed in the dentate gyrus of the hippocampus. Also expressed in the temporal and parahippocampal cortices and cells of the white matter.

The protein resides in the cytoplasm. It localises to the cytoskeleton. It is found in the mitochondrion. Its subcellular location is the microtubule organizing center. The protein localises to the centrosome. The protein resides in the postsynaptic density. Functionally, involved in the regulation of multiple aspects of embryonic and adult neurogenesis. Required for neural progenitor proliferation in the ventrical/subventrical zone during embryonic brain development and in the adult dentate gyrus of the hippocampus. Participates in the Wnt-mediated neural progenitor proliferation as a positive regulator by modulating GSK3B activity and CTNNB1 abundance. Plays a role as a modulator of the AKT-mTOR signaling pathway controlling the tempo of the process of newborn neurons integration during adult neurogenesis, including neuron positioning, dendritic development and synapse formation. Inhibits the activation of AKT-mTOR signaling upon interaction with CCDC88A. Regulates the migration of early-born granule cell precursors toward the dentate gyrus during the hippocampal development. Inhibits ATF4 transcription factor activity in neurons by disrupting ATF4 dimerization and DNA-binding. Plays a role, together with PCNT, in the microtubule network formation. The sequence is that of Disrupted in schizophrenia 1 protein from Homo sapiens (Human).